Consider the following 122-residue polypeptide: Large ribosomal subunit protein uL14 (122 aa).

Belongs to the universal ribosomal protein uL14 family. As to quaternary structure, part of the 50S ribosomal subunit. Forms a cluster with proteins L3 and L19. In the 70S ribosome, L14 and L19 interact and together make contacts with the 16S rRNA in bridges B5 and B8.

Functionally, binds to 23S rRNA. Forms part of two intersubunit bridges in the 70S ribosome. In Paenarthrobacter aurescens (strain TC1), this protein is Large ribosomal subunit protein uL14.